Here is a 2096-residue protein sequence, read N- to C-terminus: Tudor domain-containing protein 6 (2096 aa).

The Tudor 1 domain maps to Ala-65–Phe-120. The disordered stretch occupies residues Tyr-287 to Pro-316. Over residues Arg-288–Thr-302 the composition is skewed to polar residues. At Thr-293 the chain carries Phosphothreonine. 6 consecutive Tudor domains span residues Pro-310 to Met-369, Lys-536 to Leu-593, His-816 to Val-875, Pro-1033 to Val-1088, Pro-1352 to Leu-1411, and Cys-1567 to Ser-1626. Phosphoserine occurs at positions 1722 and 2062. Residues Ala-2026–Ser-2084 form the Tudor 8 domain.

In terms of assembly, found in a mRNP complex (i.e. messenger ribonucleoproteins which correspond to mRNA with bound proteins), at least composed of TDRD1, TDRD6, TDRD7 and DDX4. Found in a complex, at least composed of PIWIL1, PIWIL2, DDX4 and TDRD6. Interacts with Tex19.1 and probably Tex19.2. Interacts with PRMT5. Interacts with SNRPB (when methylated); to trigger spliceosome formation. Post-translationally, undergoes proteolytic cleavage near the C-terminal by an unknown protease during the transition from meiosis I to meiosis II in primary spermatocytes.

It is found in the cytoplasm. Functionally, tudor domain-containing protein involved in germ cell development, more specifically the formation of chromatoid body (during spermiogenesis), Balbiani body (during oogenesis), germ plasm (upon fertilization), and for proper miRNA expression and spliceosome maturation. Essential for RNA-dependent helicase UPF1 localization to chromatoid body, for UPF1-UPF2 and UPF1-DDX4 interactions which are required for mRNA degradation, using the extended 3' UTR-triggered nonsense-mediated mRNA decay (NMD) pathway. Involved in spliceosome maturation and mRNA splicing in prophase I spermatocytes through interaction with arginine N-methyltransferase PRMT5 and symmetrically arginine dimethylated SNRPB (small nuclear ribonucleoprotein-associated protein). The chain is Tudor domain-containing protein 6 from Homo sapiens (Human).